Here is a 1316-residue protein sequence, read N- to C-terminus: DNA-directed RNA polymerase subunit beta' (1316 aa).

Zn(2+) is bound by residues C60, C62, C75, and C78. D535, D537, and D539 together coordinate Mg(2+). Residues C891, C968, C975, and C978 each coordinate Zn(2+).

Belongs to the RNA polymerase beta' chain family. The RNAP catalytic core consists of 2 alpha, 1 beta, 1 beta' and 1 omega subunit. When a sigma factor is associated with the core the holoenzyme is formed, which can initiate transcription. The cofactor is Mg(2+). Zn(2+) is required as a cofactor.

The catalysed reaction is RNA(n) + a ribonucleoside 5'-triphosphate = RNA(n+1) + diphosphate. Functionally, DNA-dependent RNA polymerase catalyzes the transcription of DNA into RNA using the four ribonucleoside triphosphates as substrates. In Mycobacterium ulcerans (strain Agy99), this protein is DNA-directed RNA polymerase subunit beta'.